Here is a 214-residue protein sequence, read N- to C-terminus: Orotate phosphoribosyltransferase (214 aa).

Residue Lys26 coordinates 5-phospho-alpha-D-ribose 1-diphosphate. Position 34-35 (34-35) interacts with orotate; the sequence is FF. 5-phospho-alpha-D-ribose 1-diphosphate contacts are provided by residues 72 to 73, Arg99, Lys100, Lys103, His105, and 124 to 132; these read YK and DDVITAGTA. Orotate contacts are provided by Thr128 and Arg156.

Belongs to the purine/pyrimidine phosphoribosyltransferase family. PyrE subfamily. Homodimer. Requires Mg(2+) as cofactor.

It catalyses the reaction orotidine 5'-phosphate + diphosphate = orotate + 5-phospho-alpha-D-ribose 1-diphosphate. It participates in pyrimidine metabolism; UMP biosynthesis via de novo pathway; UMP from orotate: step 1/2. Its function is as follows. Catalyzes the transfer of a ribosyl phosphate group from 5-phosphoribose 1-diphosphate to orotate, leading to the formation of orotidine monophosphate (OMP). In Pseudoalteromonas translucida (strain TAC 125), this protein is Orotate phosphoribosyltransferase.